We begin with the raw amino-acid sequence, 422 residues long: Tyrosine--tRNA ligase 1 (422 aa).

Y36 provides a ligand contact to L-tyrosine. Residues 41-50 (PTAGSLHIGH) carry the 'HIGH' region motif. The L-tyrosine site is built by Y173 and Q177. The 'KMSKS' region motif lies at 233–237 (KFGKT). K236 serves as a coordination point for ATP. Residues 355 to 419 (SDVVTLLLET…GKKQFAMVKL (65 aa)) form the S4 RNA-binding domain.

The protein belongs to the class-I aminoacyl-tRNA synthetase family. TyrS type 1 subfamily. As to quaternary structure, homodimer.

The protein localises to the cytoplasm. It catalyses the reaction tRNA(Tyr) + L-tyrosine + ATP = L-tyrosyl-tRNA(Tyr) + AMP + diphosphate + H(+). Its function is as follows. Catalyzes the attachment of tyrosine to tRNA(Tyr) in a two-step reaction: tyrosine is first activated by ATP to form Tyr-AMP and then transferred to the acceptor end of tRNA(Tyr). This chain is Tyrosine--tRNA ligase 1, found in Vibrio vulnificus (strain CMCP6).